The sequence spans 265 residues: Bidirectional sugar transporter NEC1 (265 aa).

Residues 1 to 8 (MAQLRADD) are Extracellular-facing. Residues 9 to 29 (LSFIFGLLGNIVSFMVFLAPV) form a helical membrane-spanning segment. The 87-residue stretch at 11–97 (FIFGLLGNIV…SLFLFYAPRK (87 aa)) folds into the MtN3/slv 1 domain. Over 30–44 (PTFYKIYKRKSSEGY) the chain is Cytoplasmic. A helical transmembrane segment spans residues 45–65 (QAIPYMVALFSAGLLLYYAYL). The Extracellular portion of the chain corresponds to 66–71 (RKNAYL). A helical membrane pass occupies residues 72–92 (IVSINGFGCAIELTYISLFLF). Residues 93-103 (YAPRKSKIFTG) are Cytoplasmic-facing. A helical membrane pass occupies residues 104–124 (WLMLLELGALGMVMPITYLLA). Residues 125 to 130 (EGSHRV) are Extracellular-facing. Residues 131 to 151 (MIVGWICAAINVAVFAAPLSI) traverse the membrane as a helical segment. The 85-residue stretch at 132–216 (IVGWICAAIN…LLYFVYKDSK (85 aa)) folds into the MtN3/slv 2 domain. Residues 152 to 164 (MRQVIKTKSVEFM) lie on the Cytoplasmic side of the membrane. The helical transmembrane segment at 165-185 (PFTLSLFLTLCATMWFFYGFF) threads the bilayer. At 186–190 (KKDFY) the chain is on the extracellular side. Residues 191-211 (IAFPNILGFLFGIVQMLLYFV) form a helical membrane-spanning segment. The Cytoplasmic segment spans residues 212 to 265 (YKDSKRIDDEKSDPVREATKSKEGVEIIINIEDDNSDNALQSMEKDFSRLRTSK).

It belongs to the SWEET sugar transporter family. Forms homooligomers and/or heterooligomers. As to expression, highly expressed in nectary tissue and weakly in the stamen, especially in stomium cells and in the upper part of the filaments.

It localises to the cell membrane. Functionally, mediates both low-affinity uptake and efflux of sugar across the plasma membrane. Promotes the formation of phloem bundles in mid-veins. Probably involved in the development of stomium cells that control anther opening time. Required for pollen viability. The protein is Bidirectional sugar transporter NEC1 (NEC1) of Petunia hybrida (Petunia).